Here is a 226-residue protein sequence, read N- to C-terminus: UPF0173 metal-dependent hydrolase CHY_0920 (226 aa).

The protein belongs to the UPF0173 family.

The polypeptide is UPF0173 metal-dependent hydrolase CHY_0920 (Carboxydothermus hydrogenoformans (strain ATCC BAA-161 / DSM 6008 / Z-2901)).